The sequence spans 244 residues: Gas vesicle protein F (244 aa).

The protein belongs to the gas vesicle GvpF/GvpL family. In terms of assembly, binds GvpA.

Its subcellular location is the gas vesicle. Its function is as follows. A minor component of the gas vesicle, may be involved in preventing GvpA aggregation during gas vesicle nucleation. Gas vesicles (GV) are hollow, gas filled proteinaceous nanostructures. During planktonic growth they allow positioning of the organism at a favorable depth for light or nutrient acquisition. Cluster expression in E.coli (gvpA1-gvpA2-gvpC-gvpN-gvpJ-gvpK-gvpF-gvpG-gvpV-gvpW) allows cells to float and produces irregularly shaped gas vesicles. This Nostoc sp. (strain PCC 7120 / SAG 25.82 / UTEX 2576) protein is Gas vesicle protein F.